A 77-amino-acid polypeptide reads, in one-letter code: Acyl carrier protein (77 aa).

A Carrier domain is found at 1–76; the sequence is MATFDDVKAV…DVVNYIDNLK (76 aa). Serine 36 bears the O-(pantetheine 4'-phosphoryl)serine mark.

The protein belongs to the acyl carrier protein (ACP) family. 4'-phosphopantetheine is transferred from CoA to a specific serine of apo-ACP by AcpS. This modification is essential for activity because fatty acids are bound in thioester linkage to the sulfhydryl of the prosthetic group.

It localises to the cytoplasm. It functions in the pathway lipid metabolism; fatty acid biosynthesis. Functionally, carrier of the growing fatty acid chain in fatty acid biosynthesis. In Campylobacter jejuni subsp. jejuni serotype O:6 (strain 81116 / NCTC 11828), this protein is Acyl carrier protein.